Reading from the N-terminus, the 487-residue chain is Putative beta-glucosidase 35 (487 aa).

The N-terminal stretch at 1-27 (MGIRMGRRLLLITLLLGALLCNNVAYA) is a signal peptide. Gln-48 lines the a beta-D-glucoside pocket. Asn-76 and Asn-116 each carry an N-linked (GlcNAc...) asparagine glycan. Residues His-151 and 200 to 201 (NE) each bind a beta-D-glucoside. The active-site Proton donor is the Glu-201. The cysteines at positions 220 and 228 are disulfide-linked. Tyr-344 contributes to the a beta-D-glucoside binding site. The N-linked (GlcNAc...) asparagine glycan is linked to Asn-369. An a beta-D-glucoside-binding site is contributed by Glu-414. Residue Glu-414 is the Nucleophile of the active site. Asn-418 and Asn-419 each carry an N-linked (GlcNAc...) asparagine glycan. Position 458 (Phe-458) interacts with a beta-D-glucoside.

It belongs to the glycosyl hydrolase 1 family.

The enzyme catalyses Hydrolysis of terminal, non-reducing beta-D-glucosyl residues with release of beta-D-glucose.. This chain is Putative beta-glucosidase 35 (BGLU35), found in Oryza sativa subsp. japonica (Rice).